The sequence spans 251 residues: Triosephosphate isomerase (251 aa).

Asn-9–Lys-11 provides a ligand contact to substrate. The active-site Electrophile is His-95. Catalysis depends on Glu-167, which acts as the Proton acceptor. Residues Gly-173, Ser-213, and Gly-234–Gly-235 each bind substrate.

The protein belongs to the triosephosphate isomerase family. Homodimer.

The protein localises to the cytoplasm. It catalyses the reaction D-glyceraldehyde 3-phosphate = dihydroxyacetone phosphate. It participates in carbohydrate biosynthesis; gluconeogenesis. The protein operates within carbohydrate degradation; glycolysis; D-glyceraldehyde 3-phosphate from glycerone phosphate: step 1/1. Involved in the gluconeogenesis. Catalyzes stereospecifically the conversion of dihydroxyacetone phosphate (DHAP) to D-glyceraldehyde-3-phosphate (G3P). This is Triosephosphate isomerase from Trichlorobacter lovleyi (strain ATCC BAA-1151 / DSM 17278 / SZ) (Geobacter lovleyi).